The following is a 197-amino-acid chain: MYIYRYNMYFVKKINLDSEKQYKSSEIVEHVNKSISSALSALENVARTFVKEECGREAGEQVKIIEIHDFNQVNEPTVDSMLLYRLIDDKHRIFVYQKKTTISKVSAWTWGTNDVVTSQFGRICIFELEEYNKLSVPSFQNQIFFTPNEEMVAVGPAKIRIPKPMTMAPMCDLIDELKKSPKFKARFECMSDSEISY.

This is an uncharacterized protein from Acanthamoeba polyphaga (Amoeba).